The chain runs to 340 residues: Nuclear hormone receptor family member nhr-268 (340 aa).

Residues 1–75 (MNCLVCSARA…IGMKAASKND (75 aa)) constitute a DNA-binding region (nuclear receptor). 2 consecutive NR C4-type zinc fingers follow at residues 3 to 23 (CLVC…CFAC) and 39 to 58 (CKYF…CRAC). The region spanning 98 to 337 (KNDKNYSNFI…KRLMQDIFSH (240 aa)) is the NR LBD domain.

The protein belongs to the nuclear hormone receptor family.

It localises to the nucleus. Its function is as follows. Orphan nuclear receptor. This Caenorhabditis elegans protein is Nuclear hormone receptor family member nhr-268 (nhr-268).